Reading from the N-terminus, the 396-residue chain is Trypacidin cluster transcription factor (396 aa).

Residues Cys-20 to Cys-47 constitute a DNA-binding region (zn(2)-C6 fungal-type). Disordered stretches follow at residues Arg-54–Val-120, Asp-190–Ala-218, and Met-346–Leu-365. Residues Arg-57 to His-71 are compositionally biased toward basic and acidic residues. The span at Leu-72–Ser-82 shows a compositional bias: low complexity.

Specifically expressed in conidia.

It localises to the nucleus. In terms of biological role, transcription factor that regulates the expression of the gene clusters that mediate the biosynthesis of trypacidin, a metabolite with antiprotozoal activity and a possible role in the infection process. Trypacidin is toxic for human pulmonary and bronchial epithelial cells by initiating the intracellular formation of nitric oxide (NO) and hydrogen peroxide (H(2)O(2)), thus triggering host necrotic cell death. This Aspergillus fumigatus (strain ATCC MYA-4609 / CBS 101355 / FGSC A1100 / Af293) (Neosartorya fumigata) protein is Trypacidin cluster transcription factor.